Here is a 229-residue protein sequence, read N- to C-terminus: Uracil-DNA glycosylase (229 aa).

Residue D64 is the Proton acceptor of the active site.

Belongs to the uracil-DNA glycosylase (UDG) superfamily. UNG family.

The protein localises to the cytoplasm. The catalysed reaction is Hydrolyzes single-stranded DNA or mismatched double-stranded DNA and polynucleotides, releasing free uracil.. Excises uracil residues from the DNA which can arise as a result of misincorporation of dUMP residues by DNA polymerase or due to deamination of cytosine. The polypeptide is Uracil-DNA glycosylase (Escherichia coli O7:K1 (strain IAI39 / ExPEC)).